A 176-amino-acid chain; its full sequence is MGKVIFYEDRNFQGRHYECSSDCADLSPYFSRCNSIRVEGGCWVLYEKPNYMGYQYFLTRGEYPDYQRWMGFNDTIRSCRIIPQYRGSYRMRIYERPDFGGQMMEFMDDCPSVYDTFRYRDIHSCHVMDGYWIFYEHPSYRGRQYFMRPGEYKKFSDWGATCPTIGSFRRIMDSWY.

Beta/gamma crystallin 'Greek key' domains follow at residues 2-40 and 41-83; these read GKVI…RVEG and GCWV…RIIP. The connecting peptide stretch occupies residues 84–88; it reads QYRGS. Beta/gamma crystallin 'Greek key' domains follow at residues 89–129 and 130–172; these read YRMR…HVMD and GYWI…RRIM.

This sequence belongs to the beta/gamma-crystallin family. Monomer.

Its function is as follows. Crystallins are the dominant structural components of the vertebrate eye lens. The polypeptide is Gamma-crystallin M2 (GM2) (Chiloscyllium indicum (Slender bamboo shark)).